A 502-amino-acid chain; its full sequence is Zinc finger protein 488 (502 aa).

One can recognise an SET domain in the interval 8-130 (RSLWTNDSKI…EGEELLVWYD (123 aa)). Tyr-129 lines the S-adenosyl-L-methionine pocket. The C2H2-type 1; atypical zinc-finger motif lies at 151–174 (YTCTRCGQAFKNENPFLAHCRFLC). Disordered regions lie at residues 267–303 (SEPT…KSSR) and 338–361 (PSKR…LDSF). Polar residues predominate over residues 269–286 (PTDNAQTNESKISKNSAF). 2 C2H2-type zinc fingers span residues 438–460 (NWCA…MRSH) and 479–501 (LTCP…MTSH).

The protein belongs to the krueppel C2H2-type zinc-finger protein family. As to expression, expressed in pMN progenitors and oligodendrocyte lineage cells in the embryo with expression declining in oligodendrocytes undergoing differentiation.

The protein localises to the nucleus. Functionally, transcriptional repressor. May have histone methyltransferase activity. Negatively regulates shh signaling activity in pMN progenitor cells which prevents their switch from motor neuron to oligodendrocyte precursor cell production. Independently of shh activity, also regulates oligodendrocyte formation. The polypeptide is Zinc finger protein 488 (Danio rerio (Zebrafish)).